The chain runs to 492 residues: 2,3-bisphosphoglycerate-independent phosphoglycerate mutase (492 aa).

Residues Asp-11 and Ser-61 each contribute to the Mn(2+) site. Residue Ser-61 is the Phosphoserine intermediate of the active site. Substrate is bound by residues His-118, 147–148 (RD), Arg-177, Arg-183, 248–251 (RSDR), and Lys-321. Positions 387, 391, 428, 429, and 446 each coordinate Mn(2+).

This sequence belongs to the BPG-independent phosphoglycerate mutase family. Monomer. Mn(2+) serves as cofactor.

It carries out the reaction (2R)-2-phosphoglycerate = (2R)-3-phosphoglycerate. The protein operates within carbohydrate degradation; glycolysis; pyruvate from D-glyceraldehyde 3-phosphate: step 3/5. In terms of biological role, catalyzes the interconversion of 2-phosphoglycerate and 3-phosphoglycerate. This Wolinella succinogenes (strain ATCC 29543 / DSM 1740 / CCUG 13145 / JCM 31913 / LMG 7466 / NCTC 11488 / FDC 602W) (Vibrio succinogenes) protein is 2,3-bisphosphoglycerate-independent phosphoglycerate mutase.